The sequence spans 572 residues: Vacuolar protein sorting-associated protein vps901 (572 aa).

2 stretches are compositionally biased toward basic and acidic residues: residues 1–31 and 39–53; these read MDYPSFHEDPTKDESTVAEQRKGQSNEEKPL and DEQRNAYNEHCKNHD. The segment at 1–108 is disordered; the sequence is MDYPSFHEDP…HENNPGQQEI (108 aa). Residues 69 to 80 show a composition bias toward polar residues; sequence QYEQTDSSSDQE. A compositionally biased stretch (basic and acidic residues) spans 82–98; it reads MNEKQSLDKENRNDNIP. One can recognise a VPS9 domain in the interval 219-357; sequence VEEDRVLSEK…IETLDCSSLT (139 aa). A disordered region spans residues 430-502; that stretch reads QIDTPESKEY…IVHEEQPVDD (73 aa). A compositionally biased stretch (polar residues) spans 445 to 457; the sequence is PRGSSHSGSFTTD. One can recognise a CUE domain in the interval 529–571; that stretch reads REKAEAITALRAMFPAFDSEVIEVVLNAQQGRLSSSIDSLLEM.

Its function is as follows. Required for vacuolar protein sorting; may be required for the consumption of transport vesicles containing vacuolar protein precursors. Required for vacuolar fusion. This is Vacuolar protein sorting-associated protein vps901 (vps901) from Schizosaccharomyces pombe (strain 972 / ATCC 24843) (Fission yeast).